A 78-amino-acid polypeptide reads, in one-letter code: D-alanyl carrier protein (78 aa).

The 78-residue stretch at 1 to 78 (MDFKQEVLDV…NIVNQLSELK (78 aa)) folds into the Carrier domain. Ser-36 is modified (O-(pantetheine 4'-phosphoryl)serine).

Belongs to the DltC family. Post-translationally, 4'-phosphopantetheine is transferred from CoA to a specific serine of apo-DCP.

Its subcellular location is the cytoplasm. It functions in the pathway cell wall biogenesis; lipoteichoic acid biosynthesis. Carrier protein involved in the D-alanylation of lipoteichoic acid (LTA). The loading of thioester-linked D-alanine onto DltC is catalyzed by D-alanine--D-alanyl carrier protein ligase DltA. The DltC-carried D-alanyl group is further transferred to cell membrane phosphatidylglycerol (PG) by forming an ester bond, probably catalyzed by DltD. D-alanylation of LTA plays an important role in modulating the properties of the cell wall in Gram-positive bacteria, influencing the net charge of the cell wall. In Bacillus subtilis (strain 168), this protein is D-alanyl carrier protein.